The following is an 89-amino-acid chain: Small ribosomal subunit protein uS15 (89 aa).

The protein belongs to the universal ribosomal protein uS15 family. Part of the 30S ribosomal subunit. Forms a bridge to the 50S subunit in the 70S ribosome, contacting the 23S rRNA.

Functionally, one of the primary rRNA binding proteins, it binds directly to 16S rRNA where it helps nucleate assembly of the platform of the 30S subunit by binding and bridging several RNA helices of the 16S rRNA. In terms of biological role, forms an intersubunit bridge (bridge B4) with the 23S rRNA of the 50S subunit in the ribosome. The sequence is that of Small ribosomal subunit protein uS15 from Chlorobium phaeobacteroides (strain DSM 266 / SMG 266 / 2430).